The sequence spans 346 residues: Methylthioribose-1-phosphate isomerase (346 aa).

Substrate-binding positions include Arg-44–Ala-46, Arg-87, and Gln-194. The active-site Proton donor is the Asp-235. A substrate-binding site is contributed by Asn-245 to Lys-246.

This sequence belongs to the eIF-2B alpha/beta/delta subunits family. MtnA subfamily.

The catalysed reaction is 5-(methylsulfanyl)-alpha-D-ribose 1-phosphate = 5-(methylsulfanyl)-D-ribulose 1-phosphate. It participates in amino-acid biosynthesis; L-methionine biosynthesis via salvage pathway; L-methionine from S-methyl-5-thio-alpha-D-ribose 1-phosphate: step 1/6. Catalyzes the interconversion of methylthioribose-1-phosphate (MTR-1-P) into methylthioribulose-1-phosphate (MTRu-1-P). This chain is Methylthioribose-1-phosphate isomerase, found in Desulforamulus reducens (strain ATCC BAA-1160 / DSM 100696 / MI-1) (Desulfotomaculum reducens).